Reading from the N-terminus, the 128-residue chain is CD59 glycoprotein (128 aa).

Residues 1–25 (MGIQGGSVLFGLLLVLAVFCHSGHS) form the signal peptide. The 83-residue stretch at 26–108 (LQCYNCPNPT…QLENGGTSLS (83 aa)) folds into the UPAR/Ly6 domain. 5 cysteine pairs are disulfide-bonded: cysteine 28–cysteine 51, cysteine 31–cysteine 38, cysteine 44–cysteine 64, cysteine 70–cysteine 88, and cysteine 89–cysteine 94. Asparagine 43 is a glycosylation site (N-linked (GlcNAc...) asparagine). Residue asparagine 102 is the site of GPI-anchor amidated asparagine attachment. Residues 103–128 (GGTSLSEKTVVLLVTLLLAAAWCLHP) constitute a propeptide, removed in mature form.

In terms of assembly, interacts with T-cell surface antigen CD2. Post-translationally, N- and O-glycosylated.

It is found in the cell membrane. It localises to the secreted. Potent inhibitor of the complement membrane attack complex (MAC) action, which protects self-cells from damage during complement activation. Acts by binding to the beta-haipins of C8 (C8A and C8B) components of the assembling MAC, forming an intermolecular beta-sheet that prevents incorporation of the multiple copies of C9 required for complete formation of the osmolytic pore. The polypeptide is CD59 glycoprotein (Chlorocebus aethiops (Green monkey)).